Reading from the N-terminus, the 390-residue chain is LL-diaminopimelate aminotransferase 2 (390 aa).

2 residues coordinate substrate: Y13 and G38. Pyridoxal 5'-phosphate contacts are provided by residues Y67, 102–103 (SK), Y127, N177, Y208, and 236–238 (SLS). Substrate contacts are provided by K103, Y127, and N177. Position 239 is an N6-(pyridoxal phosphate)lysine (K239). Residue R247 coordinates pyridoxal 5'-phosphate. R365 is a substrate binding site.

The protein belongs to the class-I pyridoxal-phosphate-dependent aminotransferase family. LL-diaminopimelate aminotransferase subfamily. As to quaternary structure, homodimer. It depends on pyridoxal 5'-phosphate as a cofactor.

It carries out the reaction (2S,6S)-2,6-diaminopimelate + 2-oxoglutarate = (S)-2,3,4,5-tetrahydrodipicolinate + L-glutamate + H2O + H(+). It participates in amino-acid biosynthesis; L-lysine biosynthesis via DAP pathway; LL-2,6-diaminopimelate from (S)-tetrahydrodipicolinate (aminotransferase route): step 1/1. Functionally, involved in the synthesis of meso-diaminopimelate (m-DAP or DL-DAP), required for both lysine and peptidoglycan biosynthesis. Catalyzes the direct conversion of tetrahydrodipicolinate to LL-diaminopimelate. This chain is LL-diaminopimelate aminotransferase 2, found in Nostoc sp. (strain PCC 7120 / SAG 25.82 / UTEX 2576).